We begin with the raw amino-acid sequence, 212 residues long: Deoxyribose-phosphate aldolase (212 aa).

The Proton donor/acceptor role is filled by Asp89. Lys151 functions as the Schiff-base intermediate with acetaldehyde in the catalytic mechanism. Lys180 functions as the Proton donor/acceptor in the catalytic mechanism.

Belongs to the DeoC/FbaB aldolase family. DeoC type 1 subfamily.

It localises to the cytoplasm. The catalysed reaction is 2-deoxy-D-ribose 5-phosphate = D-glyceraldehyde 3-phosphate + acetaldehyde. It participates in carbohydrate degradation; 2-deoxy-D-ribose 1-phosphate degradation; D-glyceraldehyde 3-phosphate and acetaldehyde from 2-deoxy-alpha-D-ribose 1-phosphate: step 2/2. Functionally, catalyzes a reversible aldol reaction between acetaldehyde and D-glyceraldehyde 3-phosphate to generate 2-deoxy-D-ribose 5-phosphate. This Clostridium botulinum (strain 657 / Type Ba4) protein is Deoxyribose-phosphate aldolase.